A 676-amino-acid polypeptide reads, in one-letter code: UvrABC system protein B (676 aa).

In terms of domain architecture, Helicase ATP-binding spans 26–414 (EGLENGLAHQ…SDGEIAEQVV (389 aa)). 39–46 (GVTGSGKT) provides a ligand contact to ATP. The Beta-hairpin signature appears at 92–115 (YFDYYQPEAYVPTTDTFIEKDSSV). Residues 432 to 598 (QVDDLLSEIR…ALKKDVADIL (167 aa)) enclose the Helicase C-terminal domain. The UVR domain occupies 636–671 (EKAIQKLESKMYQHAKDLEFEQAAQVRDEIDNLRKQ).

Belongs to the UvrB family. In terms of assembly, forms a heterotetramer with UvrA during the search for lesions. Interacts with UvrC in an incision complex.

The protein resides in the cytoplasm. Functionally, the UvrABC repair system catalyzes the recognition and processing of DNA lesions. A damage recognition complex composed of 2 UvrA and 2 UvrB subunits scans DNA for abnormalities. Upon binding of the UvrA(2)B(2) complex to a putative damaged site, the DNA wraps around one UvrB monomer. DNA wrap is dependent on ATP binding by UvrB and probably causes local melting of the DNA helix, facilitating insertion of UvrB beta-hairpin between the DNA strands. Then UvrB probes one DNA strand for the presence of a lesion. If a lesion is found the UvrA subunits dissociate and the UvrB-DNA preincision complex is formed. This complex is subsequently bound by UvrC and the second UvrB is released. If no lesion is found, the DNA wraps around the other UvrB subunit that will check the other stand for damage. This Aliivibrio fischeri (strain ATCC 700601 / ES114) (Vibrio fischeri) protein is UvrABC system protein B.